Consider the following 393-residue polypeptide: Acetate kinase (393 aa).

Mg(2+) is bound at residue Asn-8. Position 15 (Lys-15) interacts with ATP. Residue Arg-91 participates in substrate binding. Asp-148 serves as the catalytic Proton donor/acceptor. ATP-binding positions include 206–210 (HLGSG), 280–282 (DMR), and 325–329 (GVGEN). Residue Glu-376 participates in Mg(2+) binding.

The protein belongs to the acetokinase family. As to quaternary structure, homodimer. Mg(2+) serves as cofactor. Mn(2+) is required as a cofactor.

It is found in the cytoplasm. It carries out the reaction acetate + ATP = acetyl phosphate + ADP. The protein operates within metabolic intermediate biosynthesis; acetyl-CoA biosynthesis; acetyl-CoA from acetate: step 1/2. Catalyzes the formation of acetyl phosphate from acetate and ATP. Can also catalyze the reverse reaction. This is Acetate kinase from Rhizobium meliloti (Ensifer meliloti).